The chain runs to 113 residues: Hydrogenase maturation factor HybF (113 aa).

H2 and E3 together coordinate Ni(2+). Zn(2+) is bound by residues C73, C76, C89, and C92.

This sequence belongs to the HypA/HybF family. HybF subfamily.

Its function is as follows. Involved in the maturation of [NiFe] hydrogenases. Required for nickel insertion into the metal center of the hydrogenase. The sequence is that of Hydrogenase maturation factor HybF from Proteus vulgaris.